We begin with the raw amino-acid sequence, 342 residues long: Phenylalanine--tRNA ligase alpha subunit (342 aa).

Glu-255 serves as a coordination point for Mg(2+).

It belongs to the class-II aminoacyl-tRNA synthetase family. Phe-tRNA synthetase alpha subunit type 1 subfamily. Tetramer of two alpha and two beta subunits. The cofactor is Mg(2+).

It is found in the cytoplasm. The enzyme catalyses tRNA(Phe) + L-phenylalanine + ATP = L-phenylalanyl-tRNA(Phe) + AMP + diphosphate + H(+). The protein is Phenylalanine--tRNA ligase alpha subunit of Pelodictyon phaeoclathratiforme (strain DSM 5477 / BU-1).